A 108-amino-acid polypeptide reads, in one-letter code: UPF0145 protein LCABL_07110 (108 aa).

Belongs to the UPF0145 family.

The polypeptide is UPF0145 protein LCABL_07110 (Lacticaseibacillus casei (strain BL23) (Lactobacillus casei)).